A 622-amino-acid chain; its full sequence is Chaperone protein HscA homolog (622 aa).

Belongs to the heat shock protein 70 family.

Functionally, chaperone involved in the maturation of iron-sulfur cluster-containing proteins. Has a low intrinsic ATPase activity which is markedly stimulated by HscB. This chain is Chaperone protein HscA homolog, found in Burkholderia pseudomallei (strain K96243).